The primary structure comprises 281 residues: 2-dehydro-3-deoxyphosphooctonate aldolase (281 aa).

The protein belongs to the KdsA family.

Its subcellular location is the cytoplasm. It catalyses the reaction D-arabinose 5-phosphate + phosphoenolpyruvate + H2O = 3-deoxy-alpha-D-manno-2-octulosonate-8-phosphate + phosphate. It functions in the pathway carbohydrate biosynthesis; 3-deoxy-D-manno-octulosonate biosynthesis; 3-deoxy-D-manno-octulosonate from D-ribulose 5-phosphate: step 2/3. It participates in bacterial outer membrane biogenesis; lipopolysaccharide biosynthesis. The chain is 2-dehydro-3-deoxyphosphooctonate aldolase from Pseudomonas fluorescens (strain ATCC BAA-477 / NRRL B-23932 / Pf-5).